Consider the following 931-residue polypeptide: Probable UDP-N-acetylglucosamine--peptide N-acetylglucosaminyltransferase SPINDLY (931 aa).

Positions 1–15 (MAWTEKDVENGKESE) are enriched in basic and acidic residues. Positions 1-38 (MAWTEKDVENGKESESLGNNGFLKGGQSSSGSKGSPGR) are disordered. The segment covering 25-37 (GGQSSSGSKGSPG) has biased composition (low complexity). TPR repeat units lie at residues 48–81 (DKDAITYANILRSRNKFVDALAIYESVLEKDSKS), 82–115 (IESLIGKGICLQMQNTGRLAFESFSEAIKVDPQN), 116–149 (ACALTHCGILYKDEGRLVEAAESYEKALKADPSY), 157–190 (AIVLTDIGTSLKLAGNTQEGIQKYYEAIKIDSHY), 191–224 (APAYYNLGVVYSEMMQYDMALNCYEKAALERPMY), 225–258 (AEAYCNMGVIFKNRGDLESAIACYERCLAVSPNF), 266–299 (AIALTDLGTKVKLEGDINQGVAYYKKALCYNWHY), 300–333 (ADAMYNLGVAYGEMLKFDMAIVFYELAFHFNPHC), 334–367 (AEACNNLGVIYKDRDNLDKAVECYQLALSIKPNF), 369–401 (QSLNNLGVVYTVQGKMDAAASMIEKAIIANPTY), and 402–435 (AEAYNNLGVLYRDAGNISLAIEAYEQCLKIDPDS). The tract at residues 436-931 (RNAGQNRLLA…NHNGNHGNLS (496 aa)) is catalytic region. The segment covering 864–884 (QQQQTQTESVVPEESSVNPSE) has biased composition (low complexity). The interval 864–931 (QQQQTQTESV…NHNGNHGNLS (68 aa)) is disordered. A compositionally biased stretch (polar residues) spans 910–931 (KSSTSEENGVQSNHNGNHGNLS).

Belongs to the glycosyltransferase 41 family. O-GlcNAc transferase subfamily.

Its subcellular location is the nucleus. The enzyme catalyses L-seryl-[protein] + UDP-N-acetyl-alpha-D-glucosamine = 3-O-(N-acetyl-beta-D-glucosaminyl)-L-seryl-[protein] + UDP + H(+). The catalysed reaction is L-threonyl-[protein] + UDP-N-acetyl-alpha-D-glucosamine = 3-O-(N-acetyl-beta-D-glucosaminyl)-L-threonyl-[protein] + UDP + H(+). Its pathway is protein modification; protein glycosylation. Functionally, probable O-linked N-acetylglucosamine transferase (OGT) involved in various processes such as gibberellin (GA) signaling pathway. OGTs catalyze the addition of nucleotide-activated sugars directly onto the polypeptide through O-glycosidic linkage with the hydroxyl of serine or threonine. Probably acts by adding O-linked sugars to yet unknown proteins. This is Probable UDP-N-acetylglucosamine--peptide N-acetylglucosaminyltransferase SPINDLY (SPY) from Solanum lycopersicum (Tomato).